The following is a 468-amino-acid chain: ATP synthase subunit beta 2 (468 aa).

155 to 162 (GGAGVGKT) is an ATP binding site.

It belongs to the ATPase alpha/beta chains family. As to quaternary structure, F-type ATPases have 2 components, CF(1) - the catalytic core - and CF(0) - the membrane proton channel. CF(1) has five subunits: alpha(3), beta(3), gamma(1), delta(1), epsilon(1). CF(0) has four main subunits: a(1), b(1), b'(1) and c(9-12).

The protein resides in the cell inner membrane. It carries out the reaction ATP + H2O + 4 H(+)(in) = ADP + phosphate + 5 H(+)(out). Its function is as follows. Produces ATP from ADP in the presence of a proton gradient across the membrane. The catalytic sites are hosted primarily by the beta subunits. The sequence is that of ATP synthase subunit beta 2 from Chlorobium luteolum (strain DSM 273 / BCRC 81028 / 2530) (Pelodictyon luteolum).